Here is a 20-residue protein sequence, read N- to C-terminus: Short cationic peptide-6a (20 aa).

Ser20 carries the serine amide modification.

As to expression, expressed by the venom gland.

The protein localises to the secreted. The chain is Short cationic peptide-6a from Cupiennius salei (American wandering spider).